A 1008-amino-acid chain; its full sequence is Ubiquitin carboxyl-terminal hydrolase 16 (1008 aa).

A helical transmembrane segment spans residues 7 to 27; that stretch reads LGISSLVLVVSLVLPLIGLFV. Residues Cys74, Cys77, Cys85, Cys88, Cys94, Cys98, His107, and Cys111 each coordinate Zn(2+). An MYND-type zinc finger spans residues 74–111; that stretch reads CPVCYCLATTRCSRCKAVRYCSGKCQIIHWRQGHKDEC. Disordered stretches follow at residues 122 to 149, 159 to 178, 187 to 233, 275 to 309, and 326 to 379; these read DESD…GPEP, LSNR…DNKD, VSVA…LDAH, SVHK…DPSL, and SDSC…YISD. The segment covering 193–203 has biased composition (low complexity); it reads SGSSFSGFSSS. Residues 222 to 233 are compositionally biased toward basic and acidic residues; that stretch reads ESERSESLLDAH. Residues 284 to 295 show a composition bias toward polar residues; that stretch reads GQNQSQSRSLHS. The span at 340 to 351 shows a compositional bias: low complexity; it reads SSLHFSFGSGSS. The USP domain maps to 542-847; it reads CGLINVGNSC…GAYMLFYARC (306 aa). Cys551 (nucleophile) is an active-site residue. His807 functions as the Proton acceptor in the catalytic mechanism. Disordered regions lie at residues 859–905 and 952–1008; these read KTEA…GNIQ and FIFG…GGER. Low complexity-rich tracts occupy residues 878–888 and 965–992; these read STISRSVSTSS and SETP…RSSP.

The protein belongs to the peptidase C19 family. In terms of assembly, interacts with SHM1 and SHM4. Interacts with HIPP27. In terms of tissue distribution, expressed in flowers, siliques, rosette leaves, cauline leaves, stems and at a lower level in roots. In roots, expressed in the sieve elements.

Its subcellular location is the membrane. It catalyses the reaction Thiol-dependent hydrolysis of ester, thioester, amide, peptide and isopeptide bonds formed by the C-terminal Gly of ubiquitin (a 76-residue protein attached to proteins as an intracellular targeting signal).. Its function is as follows. Recognizes and hydrolyzes the peptide bond at the C-terminal Gly of ubiquitin. Involved in the processing of poly-ubiquitin precursors as well as that of ubiquitinated proteins. Involved in salt tolerance by modulating sodium transport activity and repressing cell death at least partially through modulating SHM1 stability and activity. Involved in cadmium tolerance by interacting with HIPP27 and probably modulating its stability. The sequence is that of Ubiquitin carboxyl-terminal hydrolase 16 (UBP16) from Arabidopsis thaliana (Mouse-ear cress).